Reading from the N-terminus, the 506-residue chain is Trans-cinnamate 4-monooxygenase (506 aa).

The helical transmembrane segment at Asp-3–Thr-23 threads the bilayer. (E)-cinnamate-binding positions include Arg-214–Gln-219 and Ala-307. Cys-448 is a binding site for heme.

This sequence belongs to the cytochrome P450 family. Heme is required as a cofactor.

It localises to the membrane. The catalysed reaction is (E)-cinnamate + reduced [NADPH--hemoprotein reductase] + O2 = (E)-4-coumarate + oxidized [NADPH--hemoprotein reductase] + H2O + H(+). The protein operates within phenylpropanoid metabolism; trans-4-coumarate biosynthesis; trans-4-coumarate from trans-cinnamate: step 1/1. In terms of biological role, catalyzes the first oxidative step of the phenylpropanoid pathway in higher plants by transforming trans-cinnamate into p-coumarate. The compounds formed by this pathway are essential components for lignification, pollination, and defense against ultraviolet light, predators and pathogens. The polypeptide is Trans-cinnamate 4-monooxygenase (CYP73A10) (Petroselinum crispum (Parsley)).